The chain runs to 37 residues: MRVSASVKKICRNCKIIRRKGVVRVICTDPRHKQRQG.

It belongs to the bacterial ribosomal protein bL36 family.

In Polaromonas naphthalenivorans (strain CJ2), this protein is Large ribosomal subunit protein bL36.